A 1069-amino-acid polypeptide reads, in one-letter code: Receptor-type guanylate cyclase gcy-29 (1069 aa).

A signal peptide spans 1 to 23 (MLPNFWNFQFIFVIFCWIPIVVS). At 24-458 (DEKIVLKIGS…FREENCDYTQ (435 aa)) the chain is on the extracellular side. Residues Asn-161, Asn-240, and Asn-407 are each glycosylated (N-linked (GlcNAc...) asparagine). Residues 459 to 479 (TIVIATAVVCIILTVFLGIWL) traverse the membrane as a helical segment. At 480–1069 (RRACETSALD…FKKKNNTFDF (590 aa)) the chain is on the cytoplasmic side. The 310-residue stretch at 497-806 (RDDVQILDEE…RVRLATEIAL (310 aa)) folds into the Protein kinase domain. Residues 503–511 (LDEEQVKSV) and Lys-527 contribute to the ATP site. The 131-residue stretch at 876 to 1006 (TVMFSDIVGF…ETVNIAAVME (131 aa)) folds into the Guanylate cyclase domain. 3 residues coordinate Mg(2+): Asp-881, Ile-882, and Asp-925.

Belongs to the adenylyl cyclase class-4/guanylyl cyclase family. In terms of tissue distribution, expressed bilaterally in ASE and AFD sensory neurons.

The protein localises to the cell membrane. It catalyses the reaction GTP = 3',5'-cyclic GMP + diphosphate. Guanylate cyclase involved in the production of the second messenger cGMP. This is Receptor-type guanylate cyclase gcy-29 from Caenorhabditis elegans.